A 103-amino-acid polypeptide reads, in one-letter code: Thioredoxin (103 aa).

Residues 1 to 103 (MVKEITDATF…ELDEVINKYV (103 aa)) form the Thioredoxin domain. A disulfide bond links C28 and C31.

It belongs to the thioredoxin family.

In terms of biological role, component of the thioredoxin-thioredoxin reductase system. Participates in various redox reactions through the reversible oxidation of its active center dithiol to a disulfide and catalyzes dithiol-disulfide exchange reactions. This chain is Thioredoxin (trxA), found in Listeria innocua serovar 6a (strain ATCC BAA-680 / CLIP 11262).